The following is a 565-amino-acid chain: FAD-linked oxidoreductase ZEB1 (565 aa).

The first 27 residues, 1–27, serve as a signal peptide directing secretion; that stretch reads MKLSPSKYLPVLLGTLSLTIANPSADC. Residues asparagine 46, asparagine 82, and asparagine 100 are each glycosylated (N-linked (GlcNAc...) asparagine). The 179-residue stretch at 115 to 293 folds into the FAD-binding PCMH-type domain; it reads LGNYVSYAIA…ISMTVKAHPG (179 aa). N-linked (GlcNAc...) asparagine glycans are attached at residues asparagine 340, asparagine 352, and asparagine 421.

The protein belongs to the oxygen-dependent FAD-linked oxidoreductase family.

The protein operates within mycotoxin biosynthesis. Its function is as follows. FAD-linked oxidoreductase; part of the gene cluster that mediates the biosynthesis of zearalenone (ZEA), a nonsteroid estrogen that is a contaminant of cereal grains and causes estrogenic disorders in humans and animals. The ZEA backbone is synthesized from a single acetyl-CoA molecule and eight malonyl-CoA molecules. The reducing polyketide synthase ZEA2 is proposed to synthesize a reduced hexaketide intermediate by using different combinations of its reductive domains during each round of condensation. The hexaketide thioester is then transacylated to the non-reducing polyketide synthase ZEA1 and is further condensed with three malonyl-CoAs without reductive tailoring to yield a mixed reduced/unreduced nonaketide. ZEA1 must be able to interact with ZEA2 to facilitate starter-unit acyltransfer and initiate polyketide biosynthesis. ZEA1 also mediates the required C2-C7 cyclization to form the resorcylate core and catalyzes the formation of the macrolactone. ZEB1 is then responsible for the chemical conversion of beta-zearalenonol (beta-ZOL) to ZEA in the biosynthetic pathway. In Gibberella zeae (strain ATCC MYA-4620 / CBS 123657 / FGSC 9075 / NRRL 31084 / PH-1) (Wheat head blight fungus), this protein is FAD-linked oxidoreductase ZEB1.